A 101-amino-acid chain; its full sequence is Small ribosomal subunit protein uS14 (101 aa).

It belongs to the universal ribosomal protein uS14 family. As to quaternary structure, part of the 30S ribosomal subunit. Contacts proteins S3 and S10.

Its function is as follows. Binds 16S rRNA, required for the assembly of 30S particles and may also be responsible for determining the conformation of the 16S rRNA at the A site. This chain is Small ribosomal subunit protein uS14, found in Maricaulis maris (strain MCS10) (Caulobacter maris).